The primary structure comprises 211 residues: Large ribosomal subunit protein uL3 (211 aa).

Position 150 is an N5-methylglutamine (glutamine 150).

This sequence belongs to the universal ribosomal protein uL3 family. In terms of assembly, part of the 50S ribosomal subunit. Forms a cluster with proteins L14 and L19. Methylated by PrmB.

In terms of biological role, one of the primary rRNA binding proteins, it binds directly near the 3'-end of the 23S rRNA, where it nucleates assembly of the 50S subunit. This chain is Large ribosomal subunit protein uL3, found in Pseudomonas syringae pv. syringae (strain B728a).